The following is a 545-amino-acid chain: Glucose-6-phosphate isomerase (545 aa).

The Proton donor role is filled by glutamate 351. Residues histidine 382 and lysine 510 contribute to the active site.

It belongs to the GPI family.

It is found in the cytoplasm. It carries out the reaction alpha-D-glucose 6-phosphate = beta-D-fructose 6-phosphate. The protein operates within carbohydrate biosynthesis; gluconeogenesis. Its pathway is carbohydrate degradation; glycolysis; D-glyceraldehyde 3-phosphate and glycerone phosphate from D-glucose: step 2/4. Functionally, catalyzes the reversible isomerization of glucose-6-phosphate to fructose-6-phosphate. The protein is Glucose-6-phosphate isomerase of Shewanella sediminis (strain HAW-EB3).